The following is a 712-amino-acid chain: Transferrin-binding protein B (712 aa).

Residues 1 to 20 form the signal peptide; the sequence is MNNPLVNQAAMVLPVFLLSA. Cys-21 carries N-palmitoyl cysteine lipidation. A lipid anchor (S-diacylglycerol cysteine) is attached at Cys-21. The interval 59–196 is N-terminal handle domain; sequence GGYGFAMRLK…YHGKEPSRQL (138 aa). 7 disordered regions span residues 78–104, 123–144, 223–256, 309–338, 364–398, 442–495, and 689–712; these read EDEV…PKRQ, PYLK…QPKN, IIQP…LTDG, NGKA…SLSG, SAKT…SSEN, ASES…GDTN, and NATN…QPVR. The span at 95–104 shows a compositional bias: basic and acidic residues; sequence DEPKELPKRQ. Polar residues predominate over residues 128-144; that stretch reads SNHQNGNTGNGINQPKN. Residues 197–367 are N-terminal beta barrel domain; the sequence is PASGKITYKG…KVAVVGSAKT (171 aa). Low complexity-rich tracts occupy residues 372–398 and 446–459; these read ANGN…SSEN and GNNQ…GGTA. The interval 389–555 is C-terminal handle domain; it reads NGAAGTSSEN…SMFLQGERTD (167 aa). A compositionally biased stretch (basic and acidic residues) spans 462–475; the sequence is RKFDHTPESDKKDA. 2 stretches are compositionally biased toward polar residues: residues 477–495 and 689–700; these read AGTQ…GDTN and NATNASGNSSAT. The tract at residues 556-712 is C-terminal beta barrel domain; sequence EKEIPSEQNI…FGAKRQQPVR (157 aa).

It belongs to the TbpB family. Isotype II subfamily. As to quaternary structure, binds only human holo-transferrin (TF), via the TF C-terminus. Forms a large complex with TF and TbpA. Interacts via its C-terminal domain with Slam1.

The protein resides in the cell outer membrane. The protein localises to the cell surface. Its function is as follows. Neisseria acquires iron by extracting it from serum transferrin (TF) in its human host. Acts as a TF receptor and is required for TF utilization. Involved in the initial capture of TF. Helps select only those TF molecules that can be used as an iron source and concentrates them on the cell surface, maintaining the iron-loaded status of the TF C-terminal lobe until its delivery to TbpA. This chain is Transferrin-binding protein B, found in Neisseria meningitidis serogroup B (strain ATCC BAA-335 / MC58).